Consider the following 136-residue polypeptide: Acyl carrier protein 1, chloroplastic (136 aa).

The N-terminal 52 residues, 1-52, are a transit peptide targeting the chloroplast; the sequence is MASVTGTSISMASFKASLAPSRVSNLRSVSLPIKGKSFAPLRMRSARFVVCC. The 76-residue stretch at 56–131 folds into the Carrier domain; sequence PETVEKVCAI…DAADLIEKLI (76 aa). Position 91 is an O-(pantetheine 4'-phosphoryl)serine (S91).

The protein belongs to the acyl carrier protein (ACP) family. In terms of processing, 4'-phosphopantetheine is transferred from CoA to a specific serine of apo-ACP by acpS. This modification is essential for activity because fatty acids are bound in thioester linkage to the sulfhydryl of the prosthetic group.

Its subcellular location is the plastid. It localises to the chloroplast. The protein operates within lipid metabolism; fatty acid biosynthesis. Its function is as follows. Carrier of the growing fatty acid chain in fatty acid biosynthesis. This chain is Acyl carrier protein 1, chloroplastic (ACP1), found in Casuarina glauca (Swamp oak).